Consider the following 129-residue polypeptide: Small ribosomal subunit protein uS9 (129 aa).

Residues S107–R129 form a disordered region. Residues K114–R129 show a composition bias toward basic residues.

It belongs to the universal ribosomal protein uS9 family.

The protein is Small ribosomal subunit protein uS9 of Sulfurovum sp. (strain NBC37-1).